Consider the following 277-residue polypeptide: Bifunctional protein FolD (277 aa).

NADP(+) contacts are provided by residues 164–166, Ser189, and Thr230; that span reads GRS.

It belongs to the tetrahydrofolate dehydrogenase/cyclohydrolase family. Homodimer.

The enzyme catalyses (6R)-5,10-methylene-5,6,7,8-tetrahydrofolate + NADP(+) = (6R)-5,10-methenyltetrahydrofolate + NADPH. It carries out the reaction (6R)-5,10-methenyltetrahydrofolate + H2O = (6R)-10-formyltetrahydrofolate + H(+). The protein operates within one-carbon metabolism; tetrahydrofolate interconversion. Functionally, catalyzes the oxidation of 5,10-methylenetetrahydrofolate to 5,10-methenyltetrahydrofolate and then the hydrolysis of 5,10-methenyltetrahydrofolate to 10-formyltetrahydrofolate. The sequence is that of Bifunctional protein FolD from Clostridium perfringens (strain SM101 / Type A).